The primary structure comprises 443 residues: Putative transporter AmpG 1 (443 aa).

The next 12 membrane-spanning stretches (helical) occupy residues 6–26 (HVCI…MITG), 43–63 (IGIL…APVF), 74–96 (ILGH…TSIL), 106–128 (VLLS…ILSA), 144–164 (GIYI…AIYL), 172–192 (KIYQ…ILVS), 255–275 (DISL…YRLP), 300–320 (VCKF…GIIM), 326–346 (LYSI…FILL), 355–375 (ILFI…TAYI), 394–414 (LSSM…YMVV), and 416–436 (FGWQ…LLIL).

It belongs to the major facilitator superfamily.

It is found in the cell inner membrane. The protein is Putative transporter AmpG 1 (ampG1) of Rickettsia typhi (strain ATCC VR-144 / Wilmington).